We begin with the raw amino-acid sequence, 250 residues long: Uracil-DNA glycosylase (250 aa).

Asp78 acts as the Proton acceptor in catalysis. Positions 228 to 250 are disordered; it reads RGQKPVDWSGEQNNASRQGEFAL.

The protein belongs to the uracil-DNA glycosylase (UDG) superfamily. UNG family.

Its subcellular location is the cytoplasm. The catalysed reaction is Hydrolyzes single-stranded DNA or mismatched double-stranded DNA and polynucleotides, releasing free uracil.. Functionally, excises uracil residues from the DNA which can arise as a result of misincorporation of dUMP residues by DNA polymerase or due to deamination of cytosine. The polypeptide is Uracil-DNA glycosylase (Bordetella parapertussis (strain 12822 / ATCC BAA-587 / NCTC 13253)).